The chain runs to 2096 residues: Tudor domain-containing protein 6 (2096 aa).

The Tudor 1 domain maps to 65-120 (ASASPGELCLVQVGLLWHRCRVVSRQAQESRVFLLDEGRTITAGAGSLAPGRREFF). Positions 287 to 316 (YRGSTGTGDENSTSATWEEREESPDKPGSP) are disordered. The segment covering 288-302 (RGSTGTGDENSTSAT) has biased composition (polar residues). Thr-293 bears the Phosphothreonine mark. Tudor domains follow at residues 310–369 (PDKP…YFRM), 536–593 (KPEP…FRQL), 816–875 (HQRN…FLKV), 1033–1088 (PLNP…AYDV), 1352–1411 (PLQR…NAIL), and 1567–1626 (CPYI…ELLS). Ser-1722 and Ser-2062 each carry phosphoserine. One can recognise a Tudor 8 domain in the interval 2026 to 2084 (AFTVGSKCVVWSSLRNTWSKCEILETAEEGTRVLNLSNGMEEIVNPENVWNGIPKLDKS).

Found in a mRNP complex (i.e. messenger ribonucleoproteins which correspond to mRNA with bound proteins), at least composed of TDRD1, TDRD6, TDRD7 and DDX4. Found in a complex, at least composed of PIWIL1, PIWIL2, DDX4 and TDRD6. Interacts with Tex19.1 and probably Tex19.2. Interacts with PRMT5. Interacts with SNRPB (when methylated); to trigger spliceosome formation. Undergoes proteolytic cleavage near the C-terminal by an unknown protease during the transition from meiosis I to meiosis II in primary spermatocytes.

It is found in the cytoplasm. In terms of biological role, tudor domain-containing protein involved in germ cell development, more specifically the formation of chromatoid body (during spermiogenesis), Balbiani body (during oogenesis), germ plasm (upon fertilization), and for proper miRNA expression and spliceosome maturation. Essential for RNA-dependent helicase UPF1 localization to chromatoid body, for UPF1-UPF2 and UPF1-DDX4 interactions which are required for mRNA degradation, using the extended 3' UTR-triggered nonsense-mediated mRNA decay (NMD) pathway. Involved in spliceosome maturation and mRNA splicing in prophase I spermatocytes through interaction with arginine N-methyltransferase PRMT5 and symmetrically arginine dimethylated SNRPB (small nuclear ribonucleoprotein-associated protein). The protein is Tudor domain-containing protein 6 of Homo sapiens (Human).